A 693-amino-acid chain; its full sequence is MKIFREVFELGNKEIVLETGGMARQADGSVTVSCGNNVVLVTTVVKKSVAAGADFFPLSVHYLEKTYAAGKIPGGFLRREGRPSEEQILISRLIDRSIRPSFPDGFFNEIQIVATVLSYDGSFSPDMLALIGASASLAISGAPYDDIIAGVRVGYTNGKYILNPNKEELKESDLDLVVSGTDDAILMVESEANSLPESVMLGGILYAHKHLKTIINSISKLAKVSSKPRIEYTIYQINKLLKSQIKSHFFGEIKNAYTIPSKQERNIKLNELRKNVLEHIFTSDVDGNEYSEKEVLEAFHDIEKDLVRSNILEGKPRIDGRCTETIRPINVKIGVLPGVHGSALFTRGETQALVVTTLGSDRDAQLVESLDGIEKSRYMLHYNFPPYSVGECGMVGMAPKRREIGHANLAKRATQAVFPNEEAYPYVVRIVSEILESNGSSSMATVCGSSLSMMDAGVPIAEPVAGIAMGLIKDGAKYAVLSDILGDEDHLGDMDFKVAGTRYGVTALQMDIKIKGISREILEQAFEQARTGRLHILGIMNEVIREHKESVSDVAPQIHIMNVNPAKIKDVVGRGGSVVKGIVEKTGAQIDTSDSGEVKIFAKDKRSLDLAKSMVEEIVAEVEEGQIYKGKIVKLLDSGAFVNLLGSQDGYLPFSEIEQAGMKTNSLVEGQGLEVLVQNIDRGGRVKLSLVAR.

Mg(2+) contacts are provided by Asp489 and Asp495. The KH domain occupies 556 to 615 (PQIHIMNVNPAKIKDVVGRGGSVVKGIVEKTGAQIDTSDSGEVKIFAKDKRSLDLAKSMV). The 69-residue stretch at 625–693 (GQIYKGKIVK…GRVKLSLVAR (69 aa)) folds into the S1 motif domain.

Belongs to the polyribonucleotide nucleotidyltransferase family. Component of the RNA degradosome, which is a multiprotein complex involved in RNA processing and mRNA degradation. Mg(2+) is required as a cofactor.

It localises to the cytoplasm. The enzyme catalyses RNA(n+1) + phosphate = RNA(n) + a ribonucleoside 5'-diphosphate. Its function is as follows. Involved in mRNA degradation. Catalyzes the phosphorolysis of single-stranded polyribonucleotides processively in the 3'- to 5'-direction. This chain is Polyribonucleotide nucleotidyltransferase, found in Francisella philomiragia subsp. philomiragia (strain ATCC 25017 / CCUG 19701 / FSC 153 / O#319-036).